Here is a 286-residue protein sequence, read N- to C-terminus: MQNKIDYKNIKKIGLVTRPNVSLDKEILKLQSILSIYKVELVLLKESSEILDLPKYGLDDLFKISDFVISLGGDGTLISLCRKACEYDKAVLGIHAGHLGFLTDFKVDEAENFFQAFFQGEFRIEKPYLLSVFLEDKQGKILEKLAFNDVVISKNNQASMAHIEVFRKEKKFNEYFGDGLIVATPAGSTAYNLSANGPIVYTLAQAFILTPVCSHSLTQRPIVLPKGFEIEIMAKDCILCIDGQENYKMNDFKSIKVGLSDKNVALIHPKNRDYFQILKEKLHWGN.

The active-site Proton acceptor is the D74. Residues 74–75 (DG), 148–149 (ND), D178, A186, 189–194 (TAYNLS), and Q244 contribute to the NAD(+) site.

This sequence belongs to the NAD kinase family. The cofactor is a divalent metal cation.

It is found in the cytoplasm. It catalyses the reaction NAD(+) + ATP = ADP + NADP(+) + H(+). Involved in the regulation of the intracellular balance of NAD and NADP, and is a key enzyme in the biosynthesis of NADP. Catalyzes specifically the phosphorylation on 2'-hydroxyl of the adenosine moiety of NAD to yield NADP. The sequence is that of NAD kinase from Campylobacter jejuni (strain RM1221).